The sequence spans 1516 residues: MTSGIYYKGLQCWIPDEQSQWIPGSIKDCRVEGEKAFLTVQDENENETVITVKPDDLNYEGRNGLPFLRSINSDADDLTDLSYLNEPSVLDALSTRYNQLQIYTYSGIVLIAVNPFQRLPNLYTHEIVRAYSEKSRDELDPHLYAIAEDSYKCMNQEHKNQTIIISGESGAGKTVSARYIMRYFASVQALIQSTDSNFHEAPQLTAVENEILATNPIMEAFGNSKTSRNDNSSRFGKYIQILFDGNATIIGAKIQTYLLERSRLVFQPNQERNYHIFYQILAGSSSEQLEKWKLVENSQEFNYLKQGNCSTIEGVNDKEEFKATVDALKTVGIDNDTCECIFSLLAALLHIGNIEVKHSRNDAYIDSKNENLINATSLLGVDPSSLVKWLTKRKIKMASEGILKPLNEFQAVVARDSVAKFLYASLFDWLVATINKALMYSADKSNQTAKSFIGVLDIYGFEHFKKNSFEQFCINYANEKLQQEFYRHVFKLEQEEYAAEGLNWSYIDYQDNQQCISMIESRLGILSLLDEECRMPTNSDENWVSKLNDAFSKPEFKNSYQKSRFGNKEFTIKHYALDVVYCAEGFIDKNRDTISDELLELFTNSDVPFVKDLVLFRLEQTAPPADTKKIKTKPKSNTLGSMFKSSLVSLMSTINETNAHYIRCIKPNEEKEAWKFDNQMVVSQLRACGVLETIKISCAGFPSRWTFDEFVSRYYMLVPSAVRTTESLTFSKAILEKHADPTKYQIGKTKIFFRSGVTPLLESARDKALKHAAHLLYEAFAVNYYRTRFLLSRKRVRSFQAVAHGFLSRRHTEYELLSSNIIKLQSLWRTALKRKEFIQTKNSILKVQSIIRGFLLRQTLEEKTKHDATLIIQSLWLTFKAHKHYKELQYYAVRIQSLWRMKLAKRQLTELKIESTKASHLKQVSYRLESRLFEISKQLDNSEQENNKFRERIAELESHLSNYAEAKLAQERELEQTRVLISDQSQDGELKELLEEKENALIMMEEEMRQVNDANTELLRVNATLKSQLKNYDMIIVEQTSQLKEKNRIIASLTKATKILNSASSIEQSRNSEEKSRRDSSLMEMRTQKEMLVLLMNDGLKHDLDKLTEYAGRTFTTLKTLLLKDNDVEAQKLDHLFLAKLLFIIISQMWKSNLCQESVALVERYCVHTLEYVFQKTSSANERPDIGFWVANTHALLAFVYTKQQAFKHSSAFTLLSTESHESVQTIFEMIESHLSKIFFEWVRQVNNFLKPLIVQAMIITGTNTDAGDENRKLRIKFFEKPKYKITDVIHVLNKVHDSCQAYKVNYEIYNALIRSIYRFINVEAFNSLFIDERGSWKRGTNISYNYHVLKDWCLESGVPEAYLQLEELLQTSKILQFVKDDPNYVARVRDFYALNFLQIKTLLHRYDYADYEAHVPKKTMSELSKNIVAEGINQREQLTYEVLDYRLQDSFEESPSLEKIKIPDDCNVTYLRRIIDLASAEESVEQALITVGNVADNDVQNSSDEENQVPNGIKV.

The region spanning 7–62 (YKGLQCWIPDEQSQWIPGSIKDCRVEGEKAFLTVQDENENETVITVKPDDLNYEGR) is the Myosin N-terminal SH3-like domain. Residues 73–766 (SDADDLTDLS…VTPLLESARD (694 aa)) enclose the Myosin motor domain. Residue 167–174 (GESGAGKT) participates in ATP binding. The tract at residues 647–669 (LVSLMSTINETNAHYIRCIKPNE) is actin-binding. IQ domains follow at residues 793–813 (RKRVRSFQAVAHGFLSRRHTE), 818–838 (SSNIIKLQSLWRTALKRKEFI), 840–865 (TKNSILKVQSIIRGFLLRQTLEEKTK), 866–886 (HDATLIIQSLWLTFKAHKHYK), and 888–917 (LQYYAVRIQSLWRMKLAKRQLTELKIESTK). Residues 926–1034 (YRLESRLFEI…LKSQLKNYDM (109 aa)) are a coiled coil. S1065 and S1072 each carry phosphoserine. The Dilute domain occupies 1163–1431 (ERYCVHTLEY…SELSKNIVAE (269 aa)).

This sequence belongs to the TRAFAC class myosin-kinesin ATPase superfamily. Myosin family.

The protein resides in the cytoplasm. Its function is as follows. Involved in cell wall deposition where it has a role in the localization of mok1. In Schizosaccharomyces pombe (strain 972 / ATCC 24843) (Fission yeast), this protein is Myosin-52 (myo52).